A 103-amino-acid chain; its full sequence is Histone H4 (103 aa).

Over residues 1–14 the composition is skewed to gly residues; sequence MSGRGKGGKGLGKG. The segment at 1–20 is disordered; that stretch reads MSGRGKGGKGLGKGGAKRHR. N6-(2-hydroxyisobutyryl)lysine; alternate occurs at positions 6, 9, 13, 17, 32, and 45. The residue at position 6 (K6) is an N6-acetyl-N6-methyllysine; alternate. An N6-butyryllysine; alternate mark is found at K6, K9, K13, K17, K32, and K45. Residue K6 is modified to N6-glutaryllysine; alternate. K9 is modified (N6-propionyllysine; alternate). Residue K13 is modified to N6-acetyl-N6-methyllysine; alternate. K13 carries the N6-glutaryllysine; alternate modification. N6-propionyllysine; alternate is present on residues K17, K32, and K45. The DNA-binding element occupies 17-21; the sequence is KRHRK. K32 carries the post-translational modification N6-glutaryllysine; alternate. N6-succinyllysine; alternate is present on K32. K60, K78, K80, and K92 each carry N6-glutaryllysine; alternate. At K60 the chain carries N6-(2-hydroxyisobutyryl)lysine. N6-(2-hydroxyisobutyryl)lysine; alternate is present on residues K78, K80, and K92. An N6-butyryllysine; alternate mark is found at K78, K80, and K92. 3 positions are modified to N6-propionyllysine; alternate: K78, K80, and K92. Residue K78 is modified to N6-succinyllysine. K92 carries the N6-succinyllysine; alternate modification.

It belongs to the histone H4 family. The nucleosome is a histone octamer containing two molecules each of H2A, H2B, H3 and H4 assembled in one H3-H4 heterotetramer and two H2A-H2B heterodimers. The octamer wraps approximately 147 bp of DNA. Butyrylation of histones marks active promoters and competes with histone acetylation. Post-translationally, glutarylation at Lys-92 (H4K91glu) destabilizes nucleosomes by promoting dissociation of the H2A-H2B dimers from nucleosomes.

The protein localises to the nucleus. Its subcellular location is the chromosome. In terms of biological role, core component of nucleosome. Nucleosomes wrap and compact DNA into chromatin, limiting DNA accessibility to the cellular machineries which require DNA as a template. Histones thereby play a central role in transcription regulation, DNA repair, DNA replication and chromosomal stability. DNA accessibility is regulated via a complex set of post-translational modifications of histones, also called histone code, and nucleosome remodeling. The protein is Histone H4 (H4.1) of Oikopleura dioica (Tunicate).